A 438-amino-acid polypeptide reads, in one-letter code: Glutamate-1-semialdehyde 2,1-aminomutase (438 aa).

The residue at position 277 (Lys277) is an N6-(pyridoxal phosphate)lysine.

The protein belongs to the class-III pyridoxal-phosphate-dependent aminotransferase family. HemL subfamily. In terms of assembly, homodimer. Pyridoxal 5'-phosphate is required as a cofactor.

The protein resides in the cytoplasm. It catalyses the reaction (S)-4-amino-5-oxopentanoate = 5-aminolevulinate. The protein operates within porphyrin-containing compound metabolism; protoporphyrin-IX biosynthesis; 5-aminolevulinate from L-glutamyl-tRNA(Glu): step 2/2. It participates in porphyrin-containing compound metabolism; chlorophyll biosynthesis. The protein is Glutamate-1-semialdehyde 2,1-aminomutase of Synechococcus sp. (strain CC9311).